Consider the following 99-residue polypeptide: Co-chaperonin GroES (99 aa).

It belongs to the GroES chaperonin family. Heptamer of 7 subunits arranged in a ring. Interacts with the chaperonin GroEL.

The protein localises to the cytoplasm. Functionally, together with the chaperonin GroEL, plays an essential role in assisting protein folding. The GroEL-GroES system forms a nano-cage that allows encapsulation of the non-native substrate proteins and provides a physical environment optimized to promote and accelerate protein folding. GroES binds to the apical surface of the GroEL ring, thereby capping the opening of the GroEL channel. The chain is Co-chaperonin GroES from Corynebacterium kroppenstedtii (strain DSM 44385 / JCM 11950 / CIP 105744 / CCUG 35717).